Consider the following 153-residue polypeptide: Glucose-6-phosphate 1-dehydrogenase (153 aa).

Arg-21 and Lys-120 together coordinate NADP(+). D-glucose 6-phosphate is bound at residue Lys-120.

This sequence belongs to the glucose-6-phosphate dehydrogenase family.

The protein resides in the cytoplasm. The protein localises to the cytosol. It catalyses the reaction D-glucose 6-phosphate + NADP(+) = 6-phospho-D-glucono-1,5-lactone + NADPH + H(+). It functions in the pathway carbohydrate degradation; pentose phosphate pathway; D-ribulose 5-phosphate from D-glucose 6-phosphate (oxidative stage): step 1/3. Functionally, cytosolic glucose-6-phosphate dehydrogenase that catalyzes the first and rate-limiting step of the oxidative branch within the pentose phosphate pathway/shunt, an alternative route to glycolysis for the dissimilation of carbohydrates and a major source of reducing power and metabolic intermediates for fatty acid and nucleic acid biosynthetic processes. This Drosophila simulans (Fruit fly) protein is Glucose-6-phosphate 1-dehydrogenase (Zw).